The primary structure comprises 502 residues: Protein DETOXIFICATION 55 (502 aa).

The next 12 helical transmembrane spans lie at 30 to 50, 61 to 81, 112 to 132, 145 to 165, 185 to 205, 207 to 227, 261 to 283, 298 to 318, 344 to 364, 378 to 398, 419 to 439, and 447 to 467; these read IWDISFPVAAMSILNYLKNMT, LELAGGALAIGFTNITGYSVL, IFLLLLASLPISLLWLNLAPL, VASLYCSFSLPDLLANSFLHP, VSVLLHLPITAFFTFYISLGV, GVAVSSFLTNFISLSLLLCYI, VWSTLVKFAVPSCIAVCLEWWWY, VALAAAAIVIQTTSLMYTIPT, ATVAVGAAVAVSVFGLVGTTV, VVLELTAAVIPVIGACELANC, INFYAFYVVGAPVAVVLAFVW, and CYGLLGAQLACAISILTVVYN.

It belongs to the multi antimicrobial extrusion (MATE) (TC 2.A.66.1) family.

Its subcellular location is the membrane. The sequence is that of Protein DETOXIFICATION 55 from Arabidopsis thaliana (Mouse-ear cress).